A 363-amino-acid chain; its full sequence is MKLKLILAVAMLAFSLPSQAERIKDIANVQGVRSNQLIGYGLVVGLPGTGEKTRYTEQTFTTMLKNFGINLPDNFRPKIKNVAVVAVHADMPAFIKPGQELDVTVSSLGEAKSLRGGTLLQTFLKGVDGNVYAIAQGSLVVSGFSADGLDGSKVIQNTPTVGRIPNGAIVERSVATPFSTGDYLTFNLRRSDFSTAQRMADAINDLLGPDMARPLDATSVQVSAPRDVSQRVSFLATLENIEVEPADESAKVIVNSRTGTIVVGQNVKLLPAAVTHGGLTVTIAEATQVSQPNALANGQTTVTSNSTINASESNRRMFMFNPGTTLDELVRAVNLVGAAPSDVLAILEALKVAGALHGELIII.

An N-terminal signal peptide occupies residues 1–20 (MKLKLILAVAMLAFSLPSQA).

It belongs to the FlgI family. In terms of assembly, the basal body constitutes a major portion of the flagellar organelle and consists of four rings (L,P,S, and M) mounted on a central rod.

The protein localises to the periplasm. The protein resides in the bacterial flagellum basal body. In terms of biological role, assembles around the rod to form the L-ring and probably protects the motor/basal body from shearing forces during rotation. The protein is Flagellar P-ring protein of Shewanella sp. (strain MR-4).